We begin with the raw amino-acid sequence, 176 residues long: Adenine phosphoribosyltransferase (176 aa).

It belongs to the purine/pyrimidine phosphoribosyltransferase family. As to quaternary structure, homodimer.

The protein localises to the cytoplasm. It carries out the reaction AMP + diphosphate = 5-phospho-alpha-D-ribose 1-diphosphate + adenine. Its pathway is purine metabolism; AMP biosynthesis via salvage pathway; AMP from adenine: step 1/1. Catalyzes a salvage reaction resulting in the formation of AMP, that is energically less costly than de novo synthesis. This is Adenine phosphoribosyltransferase from Borreliella burgdorferi (strain ATCC 35210 / DSM 4680 / CIP 102532 / B31) (Borrelia burgdorferi).